The sequence spans 301 residues: Homoserine O-acetyltransferase (301 aa).

The active-site Acyl-thioester intermediate is the Cys-142. Substrate-binding residues include Lys-163 and Ser-192. His-235 functions as the Proton acceptor in the catalytic mechanism. Residue Glu-237 is part of the active site. Position 249 (Arg-249) interacts with substrate.

Belongs to the MetA family.

It is found in the cytoplasm. The catalysed reaction is L-homoserine + acetyl-CoA = O-acetyl-L-homoserine + CoA. Its pathway is amino-acid biosynthesis; L-methionine biosynthesis via de novo pathway; O-acetyl-L-homoserine from L-homoserine: step 1/1. In terms of biological role, transfers an acetyl group from acetyl-CoA to L-homoserine, forming acetyl-L-homoserine. The sequence is that of Homoserine O-acetyltransferase from Bacillus thuringiensis subsp. konkukian (strain 97-27).